The following is a 1939-amino-acid chain: MASPDAEMAAFGEAAPYLRKSEKERIEAQNKPFDAKSSVFVVHPKESFVKGTIQSKEGGKVTVKTEGGETLTVKEDQVFSMNPPKYDKIEDMAMMTHLHEPAVLYNLKERYAAWMIYTYSGLFCVTVNPYKWLPVYNPEVVLAYRGKKRQEAPPHIFSISDNAYQFMLTDRENQSILITGESGAGKTVNTKRVIQYFATIAASGEKKKEEQSGKMQGTLEDQIISANPLLEAFGNAKTVRNDNSSRFGKFIRIHFGATGKLASADIETYLLEKSRVTFQLPAERSYHIFYQIMSNKKPELIDMLLITTNPYDYHYVSQGEITVPSIDDQEELMATDSAIDILGFSADEKTAIYKLTGAVMHYGNLKFKQKQREEQAEPDGTEVADKAAYLMGLNSAELLKALCYPRVKVGNEFVTKGQTVSQVHNSVGALAKAVYEKMFLWMVIRINQQLDTKQPRQYFIGVLDIAGFEIFDFNSFEQLCINFTNEKLQQFFNHHMFVLEQEEYKKEGIEWEFIDFGMDLAACIELIEKPMGIFSILEEECMFPKATDTSFKNKLYDQHLGKSNNFQKPKPAKGKAEAHFSLVHYAGTVDYNISGWLEKNKDPLNETVIGLYQKSSVKTLALLFATYGGEAEGGGGKKGGKKKGSSFQTVSALFRENLNKLMANLRSTHPHFVRCIIPNETKTPGAMEHELVLHQLRCNGVLEGIRICRKGFPSRVLYADFKQRYRVLNASAIPEGQFMDSKKASEKLLGSIDVDHTQYRFGHTKVFFKAGLLGLLEEMRDDKLAEIITRTQARCRGFLMRVEYRRMVERRESIFCIQYNVRSFMNVKHWPWMKLFFKIKPLLKSAESEKEMANMKEEFEKTKEELAKSEAKRKELEEKMVVLLQEKNDLQLQVQAEADSLADAEERCDQLIKTKIQLEAKIKEVTERAEDEEEINAELTAKKRKLEDECSELKKDIDDLELTLAKVEKEKHATENKVKNLTEEMAVLDETIAKLTKEKKALQEAHQQTLDDLQVEEDKVNTLTKAKTKLEQQVDDLEGSLEQEKKLRMDLERAKRKLEGDLKLAHDSIMDLENDKQQLDEKLKKKDFEISQIQSKIEDEQALGMQLQKKIKELQARIEELEEEIEAERTSRAKAEKHRADLSRELEEISERLEEAGGATAAQIEMNKKREAEFQKMRRDLEEATLQHEATAAALRKKHADSTAELGEQIDNLQRVKQKLEKEKSELKMEIDDLASNMESVSKAKANLEKMCRTLEDQLSEIKTKEEQNQRMINDLNTQRARLQTETGEYSRQAEEKDALISQLSRGKQGFTQQIEELKRHLEEEIKAKNALAHALQSARHDCELLREQYEEEQEAKGELQRALSKANSEVAQWRTKYETDAIQRTEELEEAKKKLAQRLQDAEEHVEAVNAKCASLEKTKQRLQNEVEDLMVDVERSNAACAALDKKQKNFDKILAEWKQKYEETQTELEASQKESRSLSTELFKMKNAYEESLDHLETLKRENKNLQQEIADLTEQIAEGGKAVHELEKVKKHVEQEKSELQASLEEAEASLEHEEGKILRLQLELNQIKSEIDRKIAEKDEEIDQLKRNHLRIVESMQSTLDAEIRSRNEALRLKKKMEGDLNEMEIQLSHANRMAAEAQKNLRNTQGTLKDTQIHLDDALRTQEDLKEQVAMVERRANLLQAEVEELRGALEQTERSRKVAEQELLDATERVQLLHTQNTSLINTKKKLETDIVQIQSEMEDTIQEARNAEEKAKKAITDAAMMAEELKKEQDTSAHLERMKKNMDQTVKDLHVRLDEAEQLALKGGKKQLQKLEARVRELEGEVDSEQKRSAEAVKGVRKYERRVKELTYQCEEDRKNILRLQDLVDKLQMKVKSYKRQAEEAEELSNVNLSKFRKIQHELEEAEERADIAESQVNKLRVKSREIHGKKIEEEE.

N-acetylalanine is present on A2. The Myosin N-terminal SH3-like domain maps to 34 to 83; that stretch reads DAKSSVFVVHPKESFVKGTIQSKEGGKVTVKTEGGETLTVKEDQVFSMNP. Position 36 is an N6-methyllysine (K36). The Myosin motor domain occupies 87 to 781; the sequence is DKIEDMAMMT…LLGLLEEMRD (695 aa). At K131 the chain carries N6,N6,N6-trimethyllysine. 180-187 contacts ATP; it reads GESGAGKT. At K552 the chain carries N6,N6,N6-trimethyllysine. The segment at 658–680 is actin-binding; that stretch reads LNKLMANLRSTHPHFVRCIIPNE. Position 756 is a pros-methylhistidine (H756). Residues 760–774 are actin-binding; it reads RFGHTKVFFKAGLLG. An IQ domain is found at 784-813; the sequence is LAEIITRTQARCRGFLMRVEYRRMVERRES. The tract at residues 839–841 is hinge; sequence IKP. Positions 842 to 1939 form a coiled coil; that stretch reads LLKSAESEKE…IHGKKIEEEE (1098 aa).

Belongs to the TRAFAC class myosin-kinesin ATPase superfamily. Myosin family. In terms of assembly, muscle myosin is a hexameric protein that consists of 2 heavy chain subunits (MHC), 2 alkali light chain subunits (MLC) and 2 regulatory light chain subunits (MLC-2).

Its subcellular location is the cytoplasm. It is found in the myofibril. In terms of biological role, muscle contraction. Myosin is a protein that binds to F-actin and has ATPase activity that is activated by F-actin. This is Myosin heavy chain, skeletal muscle, adult from Gallus gallus (Chicken).